The sequence spans 358 residues: Zinc transporter ZIP1 (358 aa).

Topologically, residues 1–7 (MDLLFAK) are extracellular. The helical transmembrane segment at 8–28 (IICIGIFLVVTTFGCFIPHLM) threads the bilayer. At 29-53 (GLYKEKENEEKNKRVKNILSNLNCF) the chain is on the cytoplasmic side. The helical transmembrane segment at 54–74 (GSGFIFSIIMFHLLPETIHII) threads the bilayer. Topologically, residues 75 to 91 (SDHGNIRIFNTSDSQMK) are extracellular. A helical transmembrane segment spans residues 92–112 (ILYIFFFVFIGFCMQLGLEYV). Topologically, residues 113 to 186 (LPVDTNICCV…GKFLEILTLQ (74 aa)) are cytoplasmic. The chain crosses the membrane as a helical span at residues 187 to 207 (SFFLTISLAIHSCIEGMIIGT). Over 208-213 (STDVNY) the chain is Extracellular. A helical transmembrane segment spans residues 214-234 (VFISSFCILLHKWIAGVTVSL). Over 235–246 (SLNSNNMNKTLK) the chain is Cytoplasmic. Residues 247 to 267 (AILLLTFVFASPLGIVLGHMA) traverse the membrane as a helical segment. The Extracellular portion of the chain corresponds to 268–273 (KSAGQK). Residues 274–294 (VTCLINAVSIGTLLFIGCEIL) form a helical membrane-spanning segment. The Cytoplasmic segment spans residues 295–310 (LNEIKQNISRKVRLCK). A helical transmembrane segment spans residues 311 to 331 (WLSFCFSCLIAFALISFTTSM). Topologically, residues 332–358 (APHTHGDIDTHVHVHHHDHDHDHGHNH) are extracellular.

It belongs to the ZIP transporter (TC 2.A.5) family. Homodimer.

It is found in the plastid. It localises to the apicoplast. The protein localises to the cell membrane. The catalysed reaction is Zn(2+)(in) = Zn(2+)(out). It carries out the reaction Fe(2+)(in) = Fe(2+)(out). Transporter for the divalent zinc cation. Mediates the influx of zinc into cells from extracellular space. Can transport divalent iron ions. Does not transport manganese and cadmium cations. The chain is Zinc transporter ZIP1 from Plasmodium falciparum (isolate 3D7).